A 281-amino-acid chain; its full sequence is 2,3,4,5-tetrahydropyridine-2,6-dicarboxylate N-succinyltransferase (281 aa).

2 residues coordinate substrate: R108 and D145.

It belongs to the transferase hexapeptide repeat family. As to quaternary structure, homotrimer.

Its subcellular location is the cytoplasm. The catalysed reaction is (S)-2,3,4,5-tetrahydrodipicolinate + succinyl-CoA + H2O = (S)-2-succinylamino-6-oxoheptanedioate + CoA. It participates in amino-acid biosynthesis; L-lysine biosynthesis via DAP pathway; LL-2,6-diaminopimelate from (S)-tetrahydrodipicolinate (succinylase route): step 1/3. This is 2,3,4,5-tetrahydropyridine-2,6-dicarboxylate N-succinyltransferase from Methylobacterium nodulans (strain LMG 21967 / CNCM I-2342 / ORS 2060).